Here is an 86-residue protein sequence, read N- to C-terminus: Putative membrane protein insertion efficiency factor (86 aa).

The disordered stretch occupies residues 67-86 (LHEGGDDPVPPVKNNDNREH).

The protein belongs to the UPF0161 family.

The protein localises to the cell inner membrane. Functionally, could be involved in insertion of integral membrane proteins into the membrane. This Photorhabdus laumondii subsp. laumondii (strain DSM 15139 / CIP 105565 / TT01) (Photorhabdus luminescens subsp. laumondii) protein is Putative membrane protein insertion efficiency factor.